The following is a 170-amino-acid chain: Peptide deformylase 2 (170 aa).

Residues Cys-94 and His-136 each coordinate Fe cation. Glu-137 is an active-site residue. His-140 is a Fe cation binding site.

This sequence belongs to the polypeptide deformylase family. Fe(2+) serves as cofactor.

The enzyme catalyses N-terminal N-formyl-L-methionyl-[peptide] + H2O = N-terminal L-methionyl-[peptide] + formate. Its function is as follows. Removes the formyl group from the N-terminal Met of newly synthesized proteins. Requires at least a dipeptide for an efficient rate of reaction. N-terminal L-methionine is a prerequisite for activity but the enzyme has broad specificity at other positions. The sequence is that of Peptide deformylase 2 from Xanthomonas axonopodis pv. citri (strain 306).